The following is a 584-amino-acid chain: Glycosyltransferase family 92 protein Os08g0121900 (584 aa).

Positions 1–10 (MALAAKERKL) are enriched in basic and acidic residues. The interval 1 to 33 (MALAAKERKLSRLGSKGSGGGGGGGSFGARGQR) is disordered. The segment covering 16–28 (KGSGGGGGGGSFG) has biased composition (gly residues). A helical transmembrane segment spans residues 43 to 63 (FAAFFAFLFAGAVLFGAAHVI). A GT92 domain is found at 314–525 (HSMCVCTMLR…DKFSGRVATY (212 aa)).

The protein belongs to the glycosyltransferase 92 family.

It localises to the membrane. The polypeptide is Glycosyltransferase family 92 protein Os08g0121900 (Oryza sativa subsp. japonica (Rice)).